Here is a 936-residue protein sequence, read N- to C-terminus: Protein translocase subunit SecA (936 aa).

ATP-binding positions include Q87, G105–T109, and D515. Zn(2+) contacts are provided by C920, C922, C931, and H932.

This sequence belongs to the SecA family. Monomer and homodimer. Part of the essential Sec protein translocation apparatus which comprises SecA, SecYEG and auxiliary proteins SecDF-YajC and YidC. Zn(2+) is required as a cofactor.

The protein resides in the cell inner membrane. The protein localises to the cytoplasm. It carries out the reaction ATP + H2O + cellular proteinSide 1 = ADP + phosphate + cellular proteinSide 2.. Part of the Sec protein translocase complex. Interacts with the SecYEG preprotein conducting channel. Has a central role in coupling the hydrolysis of ATP to the transfer of proteins into and across the cell membrane, serving both as a receptor for the preprotein-SecB complex and as an ATP-driven molecular motor driving the stepwise translocation of polypeptide chains across the membrane. This Paraburkholderia phytofirmans (strain DSM 17436 / LMG 22146 / PsJN) (Burkholderia phytofirmans) protein is Protein translocase subunit SecA.